We begin with the raw amino-acid sequence, 419 residues long: Cysteine desulfurase (419 aa).

Residues 69–70 (AT), asparagine 157, glutamine 185, and 205–207 (SAH) contribute to the pyridoxal 5'-phosphate site. Lysine 208 is subject to N6-(pyridoxal phosphate)lysine. Threonine 245 lines the pyridoxal 5'-phosphate pocket. The Cysteine persulfide intermediate role is filled by cysteine 333. Cysteine 333 contributes to the [2Fe-2S] cluster binding site. Residues 392 to 419 (TPIQDEVRDDNRASSNSLNRGSAASKES) form a disordered region. Over residues 404-413 (ASSNSLNRGS) the composition is skewed to polar residues.

This sequence belongs to the class-V pyridoxal-phosphate-dependent aminotransferase family. NifS/IscS subfamily. In terms of assembly, homodimer. Pyridoxal 5'-phosphate is required as a cofactor.

It carries out the reaction (sulfur carrier)-H + L-cysteine = (sulfur carrier)-SH + L-alanine. Catalyzes the removal of elemental sulfur atoms from cysteine to produce alanine. Seems to participate in the biosynthesis of the nitrogenase metalloclusters by providing the inorganic sulfur required for the Fe-S core formation. This is Cysteine desulfurase from Frankia sp. (strain EuIK1).